A 630-amino-acid chain; its full sequence is tRNA uridine 5-carboxymethylaminomethyl modification enzyme MnmG (630 aa).

13 to 18 lines the FAD pocket; sequence GGGHAG. 273 to 287 provides a ligand contact to NAD(+); it reads GPRYCPSIEDKVNRF.

The protein belongs to the MnmG family. Homodimer. Heterotetramer of two MnmE and two MnmG subunits. FAD serves as cofactor.

It is found in the cytoplasm. In terms of biological role, NAD-binding protein involved in the addition of a carboxymethylaminomethyl (cmnm) group at the wobble position (U34) of certain tRNAs, forming tRNA-cmnm(5)s(2)U34. The polypeptide is tRNA uridine 5-carboxymethylaminomethyl modification enzyme MnmG (Teredinibacter turnerae (strain ATCC 39867 / T7901)).